Here is a 232-residue protein sequence, read N- to C-terminus: Ribonuclease 3 (232 aa).

Residues 6–135 form the RNase III domain; sequence QDYLAKTYGI…FIGALYLDQG (130 aa). E48 contacts Mg(2+). The active site involves D52. Mg(2+) contacts are provided by D121 and E124. The active site involves E124. Residues 161–230 enclose the DRBM domain; the sequence is DAKTSLQEFL…AKHALEKLRM (70 aa).

The protein belongs to the ribonuclease III family. Homodimer. Mg(2+) serves as cofactor.

The protein resides in the cytoplasm. It catalyses the reaction Endonucleolytic cleavage to 5'-phosphomonoester.. Functionally, digests double-stranded RNA. Involved in the processing of primary rRNA transcript to yield the immediate precursors to the large and small rRNAs (23S and 16S). Processes some mRNAs, and tRNAs when they are encoded in the rRNA operon. Processes pre-crRNA and tracrRNA of type II CRISPR loci if present in the organism. In Limosilactobacillus fermentum (strain NBRC 3956 / LMG 18251) (Lactobacillus fermentum), this protein is Ribonuclease 3.